Here is a 201-residue protein sequence, read N- to C-terminus: Peptidyl-tRNA hydrolase (201 aa).

Y14 lines the tRNA pocket. The active-site Proton acceptor is H19. TRNA-binding residues include Y64, N66, and N113. The segment at 178-201 is disordered; the sequence is PGPAMNRFNRKPEPPESGGEVAAK.

The protein belongs to the PTH family. Monomer.

It localises to the cytoplasm. It carries out the reaction an N-acyl-L-alpha-aminoacyl-tRNA + H2O = an N-acyl-L-amino acid + a tRNA + H(+). Its function is as follows. Hydrolyzes ribosome-free peptidyl-tRNAs (with 1 or more amino acids incorporated), which drop off the ribosome during protein synthesis, or as a result of ribosome stalling. Functionally, catalyzes the release of premature peptidyl moieties from peptidyl-tRNA molecules trapped in stalled 50S ribosomal subunits, and thus maintains levels of free tRNAs and 50S ribosomes. The protein is Peptidyl-tRNA hydrolase of Koribacter versatilis (strain Ellin345).